Reading from the N-terminus, the 537-residue chain is Chaperonin GroEL 2 (537 aa).

ATP is bound by residues 29-32 (TLGP), 86-90 (DGTTT), glycine 413, 477-479 (NAA), and aspartate 493.

It belongs to the chaperonin (HSP60) family. As to quaternary structure, forms a cylinder of 14 subunits composed of two heptameric rings stacked back-to-back. Interacts with the co-chaperonin GroES.

The protein resides in the cytoplasm. It carries out the reaction ATP + H2O + a folded polypeptide = ADP + phosphate + an unfolded polypeptide.. In terms of biological role, together with its co-chaperonin GroES, plays an essential role in assisting protein folding. The GroEL-GroES system forms a nano-cage that allows encapsulation of the non-native substrate proteins and provides a physical environment optimized to promote and accelerate protein folding. The protein is Chaperonin GroEL 2 of Rhodococcus jostii (strain RHA1).